Reading from the N-terminus, the 317-residue chain is Beta-ketoacyl-[acyl-carrier-protein] synthase III (317 aa).

Residues C112 and H244 contribute to the active site. Residues 245 to 249 (QANLR) are ACP-binding. N274 is a catalytic residue.

The protein belongs to the thiolase-like superfamily. FabH family. As to quaternary structure, homodimer.

The protein localises to the cytoplasm. The enzyme catalyses malonyl-[ACP] + acetyl-CoA + H(+) = 3-oxobutanoyl-[ACP] + CO2 + CoA. The protein operates within lipid metabolism; fatty acid biosynthesis. Its function is as follows. Catalyzes the condensation reaction of fatty acid synthesis by the addition to an acyl acceptor of two carbons from malonyl-ACP. Catalyzes the first condensation reaction which initiates fatty acid synthesis and may therefore play a role in governing the total rate of fatty acid production. Possesses both acetoacetyl-ACP synthase and acetyl transacylase activities. Its substrate specificity determines the biosynthesis of branched-chain and/or straight-chain of fatty acids. This Serratia proteamaculans (strain 568) protein is Beta-ketoacyl-[acyl-carrier-protein] synthase III.